Consider the following 327-residue polypeptide: DNA-directed RNA polymerase subunit alpha (327 aa).

The segment at 1–233 is alpha N-terminal domain (alpha-NTD); it reads MVREKVKVST…NLFIPFLHVE (233 aa). Positions 265-327 are alpha C-terminal domain (alpha-CTD); sequence KELAFQYIFI…KKILDILEKK (63 aa).

Belongs to the RNA polymerase alpha chain family. In plastids the minimal PEP RNA polymerase catalytic core is composed of four subunits: alpha, beta, beta', and beta''. When a (nuclear-encoded) sigma factor is associated with the core the holoenzyme is formed, which can initiate transcription.

Its subcellular location is the plastid. The protein localises to the chloroplast. It carries out the reaction RNA(n) + a ribonucleoside 5'-triphosphate = RNA(n+1) + diphosphate. Functionally, DNA-dependent RNA polymerase catalyzes the transcription of DNA into RNA using the four ribonucleoside triphosphates as substrates. The chain is DNA-directed RNA polymerase subunit alpha from Olimarabidopsis pumila (Dwarf rocket).